The following is a 274-amino-acid chain: Large ribosomal subunit protein uL2 (274 aa).

The interval 223–274 is disordered; the sequence is VVMNPVDHPHGGGEGRTSGGRHPVSPWGVPTKGFKTRKNKRTDKYIVRRRTK. Basic residues predominate over residues 256 to 274; sequence FKTRKNKRTDKYIVRRRTK.

The protein belongs to the universal ribosomal protein uL2 family. Part of the 50S ribosomal subunit. Forms a bridge to the 30S subunit in the 70S ribosome.

Its function is as follows. One of the primary rRNA binding proteins. Required for association of the 30S and 50S subunits to form the 70S ribosome, for tRNA binding and peptide bond formation. It has been suggested to have peptidyltransferase activity; this is somewhat controversial. Makes several contacts with the 16S rRNA in the 70S ribosome. This is Large ribosomal subunit protein uL2 from Vibrio atlanticus (strain LGP32) (Vibrio splendidus (strain Mel32)).